The following is a 1578-amino-acid chain: Formin-2 (1578 aa).

Basic and acidic residues-rich tracts occupy residues 1 to 17, 26 to 35, and 57 to 66; these read MGNQ…DASH, AGPRDAEITK, and TSKKKSKSDS. The tract at residues 1–73 is disordered; it reads MGNQDGKLKR…SDSRASVFSN (73 aa). The residue at position 89 (S89) is a Phosphoserine. Disordered stretches follow at residues 208 to 230, 244 to 383, and 401 to 458; these read KLLL…QPGA, EAEK…PSPR, and RQLS…GLSR. Polar residues-rich tracts occupy residues 273–282 and 290–300; these read SSGSHLTSET and SAVTDSLSSPA. Residues 322 to 333 show a composition bias toward acidic residues; it reads DTDEECEEDAFE. The segment covering 351–364 has biased composition (basic and acidic residues); the sequence is ASQRLEKEPEEGMR. 2 stretches are compositionally biased toward low complexity: residues 404–418 and 427–442; these read SSPN…NQSP and SVSR…AAAP. Residues S459, S489, and S493 each carry the phosphoserine modification. The tract at residues 587 to 634 is disordered; the sequence is SMDYSEGQFPRREPSMWPSSKLPEEEPSPKDVDTEPKSSILESPKKCS. Over residues 608 to 622 the composition is skewed to basic and acidic residues; sequence LPEEEPSPKDVDTEP. A coiled-coil region spans residues 643–683; that stretch reads DVKSEGQATVIQQLEQTIEDLRTKIAELEKQYPALDLEGPR. Disordered stretches follow at residues 714-765, 786-836, and 880-944; these read RTLE…SGPQ, DAQQ…GNNC, and PALQ…MGIS. Residues 735–1124 enclose the FH1 domain; sequence PPPKAPPEGL…GCGFLFPPLP (390 aa). Positions 786–795 are enriched in polar residues; sequence DAQQIQSASQ. Positions 803–817 are enriched in low complexity; that stretch reads LGSDSQGQPSQPSLH. The span at 818–827 shows a compositional bias: basic and acidic residues; it reads TESETSHEHS. The segment covering 893–944 has biased composition (pro residues); that stretch reads LPAPPQPPPLPGLGVPPPPPAPPLPGMGIPPPPPLPGMGIPPPPPLPGMGIS. Tandem repeats lie at residues 919–929, 930–940, 941–951, 952–962, 963–973, 974–984, 985–995, 996–1006, 1007–1017, 1018–1028, 1029–1039, and 1040–1050. The interval 919–1039 is 12 X 11 AA tandem repeats of [MV]-G-I-P-P-P-P-P-L-P-G; sequence MGIPPPPPLP…GIPPPPPLPG (121 aa). The segment covering 1037-1097 has biased composition (pro residues); it reads LPGVGIPPPP…PPPPLLPGSG (61 aa). The tract at residues 1037-1108 is disordered; that stretch reads LPGVGIPPPP…PHSSQVGSST (72 aa). One can recognise an FH2 domain in the interval 1139–1554; it reads RKQLIEPCRP…KEAEEVCRQK (416 aa). Positions 1419–1455 form a coiled coil; sequence QELFQASQMKFEDFQKDLRKLKKDLKACEAEAGKVYQ. The tract at residues 1571–1578 is important for interaction with SPIRE1; it reads KAKISMKT.

It belongs to the formin homology family. Cappuccino subfamily. Interacts with SPIRE1. Binds actin. Interacts with CDKN1A. As to expression, detected in brain and in oocytes (at protein level). Expressed almost exclusively in the developing and mature central nervous system. Detected in oocytes.

Its subcellular location is the cytoplasm. It is found in the cytoskeleton. The protein resides in the cytosol. The protein localises to the perinuclear region. It localises to the nucleus. Its subcellular location is the nucleolus. It is found in the cell membrane. The protein resides in the cell cortex. The protein localises to the cytoplasmic vesicle membrane. Functionally, actin-binding protein that is involved in actin cytoskeleton assembly and reorganization. Acts as an actin nucleation factor and promotes assembly of actin filaments together with SPIRE1 and SPIRE2. Involved in intracellular vesicle transport along actin fibers, providing a novel link between actin cytoskeleton dynamics and intracellular transport. Required for asymmetric spindle positioning, asymmetric oocyte division and polar body extrusion during female germ cell meiosis. Plays a role in responses to DNA damage, cellular stress and hypoxia by protecting CDKN1A against degradation, and thereby plays a role in stress-induced cell cycle arrest. Also acts in the nucleus: together with SPIRE1 and SPIRE2, promotes assembly of nuclear actin filaments in response to DNA damage in order to facilitate movement of chromatin and repair factors after DNA damage. Protects cells against apoptosis by protecting CDKN1A against degradation. This Mus musculus (Mouse) protein is Formin-2 (Fmn2).